Consider the following 979-residue polypeptide: Chromosome partition protein Smc (979 aa).

33–40 is an ATP binding site; that stretch reads PNGSGKSN. Residues 169-400 are a coiled coil; the sequence is SKYKLDKEEA…INILKQQFEN (232 aa). The SMC hinge domain occupies 419-538; that stretch reads DGYIGLASEL…DNVDNANRIA (120 aa). Coiled coils occupy residues 572–716 and 750–818; these read ILNY…HSDS and SLDL…DKII.

It belongs to the SMC family. As to quaternary structure, homodimer.

The protein resides in the cytoplasm. Functionally, required for chromosome condensation and partitioning. The polypeptide is Chromosome partition protein Smc (Mesomycoplasma hyorhinis (Mycoplasma hyorhinis)).